The chain runs to 324 residues: tRNA dimethylallyltransferase (324 aa).

15 to 22 contacts ATP; sequence GPTATGKS. 17 to 22 contacts substrate; it reads TATGKS. Residues 40–43 form an interaction with substrate tRNA region; it reads DSAQ.

Belongs to the IPP transferase family. In terms of assembly, monomer. The cofactor is Mg(2+).

It catalyses the reaction adenosine(37) in tRNA + dimethylallyl diphosphate = N(6)-dimethylallyladenosine(37) in tRNA + diphosphate. Functionally, catalyzes the transfer of a dimethylallyl group onto the adenine at position 37 in tRNAs that read codons beginning with uridine, leading to the formation of N6-(dimethylallyl)adenosine (i(6)A). This is tRNA dimethylallyltransferase from Moorella thermoacetica (strain ATCC 39073 / JCM 9320).